The sequence spans 680 residues: Lipase 1 (680 aa).

The signal sequence occupies residues 1 to 34 (MKSQNKYSIRKFSVGASSILIATLLFLSGGQAQA). A propeptide spanning residues 35–290 (AEKQVNMGNS…AKAKDDQTNK (256 aa)) is cleaved from the precursor. The disordered stretch occupies residues 82-259 (KNLHNDKTIS…PTKDNDKKNG (178 aa)). A compositionally biased stretch (basic and acidic residues) spans 84-111 (LHNDKTISEENHRKTDDLNKDQLKDDKN). Polar residues-rich tracts occupy residues 125-138 (KNNNANPSDVNQGL), 162-193 (SQDSNANNNLPSQSLTKEAPSLNKSDQTSQRE), and 204-223 (QPQQNNQANDKITNHNFNNE). The span at 224–234 (QEVKPQKDEKT) shows a compositional bias: basic and acidic residues. Residues 235–246 (LSVSDLKNNQKS) are compositionally biased toward polar residues. The active-site Nucleophile is Ser-408. The active-site Charge relay system is the Asp-600. Asp-638 is a binding site for Ca(2+). The active-site Charge relay system is His-639. Ca(2+)-binding residues include Asp-641, Asp-646, and Asp-649.

This sequence belongs to the AB hydrolase superfamily. Lipase family.

It localises to the secreted. It catalyses the reaction a triacylglycerol + H2O = a diacylglycerol + a fatty acid + H(+). This chain is Lipase 1 (lip1), found in Staphylococcus aureus (strain Mu50 / ATCC 700699).